Reading from the N-terminus, the 412-residue chain is Multifunctional CCA protein (412 aa).

ATP-binding residues include G8 and R11. Residues G8 and R11 each coordinate CTP. D21 and D23 together coordinate Mg(2+). 3 residues coordinate ATP: R91, R138, and R141. Residues R91, R138, and R141 each contribute to the CTP site. One can recognise an HD domain in the interval 229–334 (RGQHTLLALQ…LELFNQLDVW (106 aa)).

This sequence belongs to the tRNA nucleotidyltransferase/poly(A) polymerase family. Bacterial CCA-adding enzyme type 1 subfamily. In terms of assembly, monomer. Can also form homodimers and oligomers. Mg(2+) serves as cofactor. Ni(2+) is required as a cofactor.

It carries out the reaction a tRNA precursor + 2 CTP + ATP = a tRNA with a 3' CCA end + 3 diphosphate. It catalyses the reaction a tRNA with a 3' CCA end + 2 CTP + ATP = a tRNA with a 3' CCACCA end + 3 diphosphate. Catalyzes the addition and repair of the essential 3'-terminal CCA sequence in tRNAs without using a nucleic acid template. Adds these three nucleotides in the order of C, C, and A to the tRNA nucleotide-73, using CTP and ATP as substrates and producing inorganic pyrophosphate. tRNA 3'-terminal CCA addition is required both for tRNA processing and repair. Also involved in tRNA surveillance by mediating tandem CCA addition to generate a CCACCA at the 3' terminus of unstable tRNAs. While stable tRNAs receive only 3'-terminal CCA, unstable tRNAs are marked with CCACCA and rapidly degraded. The polypeptide is Multifunctional CCA protein (Haemophilus ducreyi (strain 35000HP / ATCC 700724)).